A 230-amino-acid chain; its full sequence is Protein RESPONSE TO ABA AND SALT 1 (230 aa).

One can recognise a DOG1 domain in the interval 7 to 230; sequence SQSFTIFVDG…RLRDRDQERA (224 aa).

Its function is as follows. Negative regulator of salt (NaCl) tolerance probably by enhancing abscisic acid (ABA) sensitivity. In Arabidopsis thaliana (Mouse-ear cress), this protein is Protein RESPONSE TO ABA AND SALT 1.